The following is a 354-amino-acid chain: Type II methylase M.HgiDII (354 aa).

One can recognise an SAM-dependent MTase C5-type domain in the interval 3–344 (GAVIDLFCGV…KSIKRFLEGL (342 aa)). Cys79 is an active-site residue.

This sequence belongs to the class I-like SAM-binding methyltransferase superfamily. C5-methyltransferase family.

The catalysed reaction is a 2'-deoxycytidine in DNA + S-adenosyl-L-methionine = a 5-methyl-2'-deoxycytidine in DNA + S-adenosyl-L-homocysteine + H(+). In terms of biological role, a methylase that recognizes the double-stranded sequence 5'-GTCGAC-3', methylates C-? on both strands and protects the DNA from cleavage by the HgiDII endonuclease. This Herpetosiphon aurantiacus (Herpetosiphon giganteus) protein is Type II methylase M.HgiDII.